The following is a 320-amino-acid chain: ATP-dependent 6-phosphofructokinase (320 aa).

Gly11 provides a ligand contact to ATP. Arg21–Arg25 lines the ADP pocket. Residues Arg72 to Cys73 and Gly102 to Ser105 each bind ATP. Asp103 is a binding site for Mg(2+). Substrate is bound at residue Thr125–Asp127. The Proton acceptor role is filled by Asp127. Arg154 provides a ligand contact to ADP. Residues Arg162 and Met169–Arg171 each bind substrate. ADP-binding positions include Gly185–Glu187 and Lys214–His216. Substrate is bound by residues Glu223, Arg244, and His250 to Arg253.

The protein belongs to the phosphofructokinase type A (PFKA) family. ATP-dependent PFK group I subfamily. Prokaryotic clade 'B1' sub-subfamily. Homotetramer. It depends on Mg(2+) as a cofactor.

It localises to the cytoplasm. The enzyme catalyses beta-D-fructose 6-phosphate + ATP = beta-D-fructose 1,6-bisphosphate + ADP + H(+). The protein operates within carbohydrate degradation; glycolysis; D-glyceraldehyde 3-phosphate and glycerone phosphate from D-glucose: step 3/4. With respect to regulation, allosterically activated by ADP and other diphosphonucleosides, and allosterically inhibited by phosphoenolpyruvate. In terms of biological role, catalyzes the phosphorylation of D-fructose 6-phosphate to fructose 1,6-bisphosphate by ATP, the first committing step of glycolysis. The polypeptide is ATP-dependent 6-phosphofructokinase (Clostridium botulinum (strain Eklund 17B / Type B)).